A 178-amino-acid polypeptide reads, in one-letter code: CASP-like protein 2A2 (178 aa).

Residues 1 to 22 (MDKTDQTAIDGSALELNRTEKT) lie on the Cytoplasmic side of the membrane. The chain crosses the membrane as a helical span at residues 23 to 43 (VEAVLRVASMALSITGLVIMI). The Extracellular portion of the chain corresponds to 44 to 69 (KNSISNDFGSLSYSNLGAFMYLVGAN). A helical membrane pass occupies residues 70–90 (GVCAAYSLLSALAILALPCPI). The Cytoplasmic segment spans residues 91 to 96 (SKVQVR). A helical transmembrane segment spans residues 97–117 (TLFLLDQVVTYVVLAAGAVSA). The Extracellular segment spans residues 118–145 (ETVYLAYYGNIPITWSSACDSYGIFCHK). The helical transmembrane segment at 146-166 (ALISVVFTFVVSLLYMLLSLI) threads the bilayer. The Cytoplasmic portion of the chain corresponds to 167–178 (SSYRLFSRFEAP).

Belongs to the Casparian strip membrane proteins (CASP) family. In terms of assembly, homodimer and heterodimers.

It localises to the cell membrane. This chain is CASP-like protein 2A2, found in Arabidopsis lyrata subsp. lyrata (Lyre-leaved rock-cress).